The primary structure comprises 380 residues: Cytochrome b (380 aa).

Transmembrane regions (helical) follow at residues 33 to 53 (FGSLLGLCLATQILTGLFLAM), 77 to 98 (WLIRNIHANGASFFFICIYMHI), 113 to 133 (WNIGVVLLLLTMMTAFVGYVL), and 178 to 198 (FFAFHFLFPFVIAAATVLHLL). Residues H83 and H97 each coordinate heme b. The heme b site is built by H182 and H196. H201 is a binding site for a ubiquinone. Helical transmembrane passes span 226 to 246 (YKDLLGFVAMLLGLTSLALFA), 288 to 308 (LGGVLALLFSILVLMVVPILH), 320 to 340 (LTQFLFWTLVADMLILTWIGG), and 347 to 367 (FIIIGQIASVIYFTIFLVLAP).

Belongs to the cytochrome b family. The cytochrome bc1 complex contains 3 respiratory subunits (MT-CYB, CYC1 and UQCRFS1), 2 core proteins (UQCRC1 and UQCRC2) and probably 6 low-molecular weight proteins. Heme b serves as cofactor.

It localises to the mitochondrion inner membrane. Component of the ubiquinol-cytochrome c reductase complex (complex III or cytochrome b-c1 complex) that is part of the mitochondrial respiratory chain. The b-c1 complex mediates electron transfer from ubiquinol to cytochrome c. Contributes to the generation of a proton gradient across the mitochondrial membrane that is then used for ATP synthesis. This Salmo salar (Atlantic salmon) protein is Cytochrome b (mt-cyb).